The chain runs to 644 residues: Exoribonuclease 2 (644 aa).

An RNB domain is found at Arg-189–Lys-516. An S1 motif domain is found at Asn-561–Ala-643.

This sequence belongs to the RNR ribonuclease family. RNase II subfamily.

It is found in the cytoplasm. It carries out the reaction Exonucleolytic cleavage in the 3'- to 5'-direction to yield nucleoside 5'-phosphates.. Involved in mRNA degradation. Hydrolyzes single-stranded polyribonucleotides processively in the 3' to 5' direction. This Salmonella paratyphi B (strain ATCC BAA-1250 / SPB7) protein is Exoribonuclease 2.